The following is a 310-amino-acid chain: Protease HtpX homolog (310 aa).

The next 2 membrane-spanning stretches (helical) occupy residues 7–27 (SVML…LIGG) and 29–49 (AGMT…YWYS). His131 is a binding site for Zn(2+). Glu132 is an active-site residue. Zn(2+) is bound at residue His135. The next 2 membrane-spanning stretches (helical) occupy residues 141-161 (ILIG…ASMA) and 178-198 (PLGF…AALI). Glu207 contributes to the Zn(2+) binding site. The segment at 277–310 (LTGARPQSGGAPSGPERTARNAEDSAKDFWDSLK) is disordered. Residues 293 to 310 (RTARNAEDSAKDFWDSLK) show a composition bias toward basic and acidic residues.

The protein belongs to the peptidase M48B family. Requires Zn(2+) as cofactor.

Its subcellular location is the cell inner membrane. The sequence is that of Protease HtpX homolog from Desulfatibacillum aliphaticivorans.